A 304-amino-acid polypeptide reads, in one-letter code: Homoserine kinase (304 aa).

90–100 (PLARGLGSSAS) serves as a coordination point for ATP.

This sequence belongs to the GHMP kinase family. Homoserine kinase subfamily.

Its subcellular location is the cytoplasm. It carries out the reaction L-homoserine + ATP = O-phospho-L-homoserine + ADP + H(+). It functions in the pathway amino-acid biosynthesis; L-threonine biosynthesis; L-threonine from L-aspartate: step 4/5. Its function is as follows. Catalyzes the ATP-dependent phosphorylation of L-homoserine to L-homoserine phosphate. The chain is Homoserine kinase from Staphylococcus aureus (strain JH9).